A 222-amino-acid chain; its full sequence is Uridine diphosphate glucose pyrophosphatase NUDT14 (222 aa).

The Nudix hydrolase domain maps to 38 to 206 (KTHDSVTILM…DVPKTLGVIF (169 aa)). A Nudix box motif is present at residues 111–129 (PGLSLEEVACKEAWEECGY).

This sequence belongs to the Nudix hydrolase family. Homodimer. Mg(2+) is required as a cofactor.

The protein resides in the cytoplasm. The enzyme catalyses UDP-sugar + H2O = UMP + alpha-D-aldose 1-phosphate.. In terms of biological role, hydrolyzes UDP-glucose to glucose 1-phosphate and UMP and ADP-ribose to ribose 5-phosphate and AMP. The physiological substrate is probably UDP-glucose. Poor activity on other substrates such as ADP-glucose, CDP-glucose, GDP-glucose and GDP-mannose. The polypeptide is Uridine diphosphate glucose pyrophosphatase NUDT14 (NUDT14) (Bos taurus (Bovine)).